Reading from the N-terminus, the 500-residue chain is L-arabinose isomerase (500 aa).

Positions 306, 333, 350, and 450 each coordinate Mn(2+).

This sequence belongs to the arabinose isomerase family. Homohexamer. The cofactor is Mn(2+).

The enzyme catalyses beta-L-arabinopyranose = L-ribulose. Its pathway is carbohydrate degradation; L-arabinose degradation via L-ribulose; D-xylulose 5-phosphate from L-arabinose (bacterial route): step 1/3. Functionally, catalyzes the conversion of L-arabinose to L-ribulose. The polypeptide is L-arabinose isomerase (Salmonella enteritidis PT4 (strain P125109)).